The sequence spans 200 residues: MEEVRGENEGKLEKEGKPEDEVEPEDEEKSDEDEKPDKKAKPAPRQGKPEEEAKPDEQGQDEGKPEKQGKSDGEGKRQGESKPDSQAKSASEARAAEKRPAEDYVPRKAKRKTDRGTDDSPKNSQEDLQDRHVSSEEMMRECADMTRAQEELRKRQKMGGFHWVPRDAQDALVPRGPRGVRGVRGGGGRSQRGLHDIPYL.

Residues 1–19 (MEEVRGENEGKLEKEGKPE) show a composition bias toward basic and acidic residues. Positions 1-200 (MEEVRGENEG…QRGLHDIPYL (200 aa)) are disordered. Over residues 20 to 34 (DEVEPEDEEKSDEDE) the composition is skewed to acidic residues. Phosphoserine is present on S30. 3 stretches are compositionally biased toward basic and acidic residues: residues 47–85 (GKPEEEAKPDEQGQDEGKPEKQGKSDGEGKRQGESKPDS), 94–106 (RAAEKRPAEDYVP), and 114–153 (DRGTDDSPKNSQEDLQDRHVSSEEMMRECADMTRAQEELR).

This sequence belongs to the TFS-II family. TFA subfamily.

It localises to the nucleus. May be involved in transcriptional regulation. The protein is Transcription elongation factor A protein-like 3 (Tceal3) of Mus musculus (Mouse).